Here is a 443-residue protein sequence, read N- to C-terminus: Glycerol-3-phosphate acyltransferase 3-like (443 aa).

Transmembrane regions (helical) follow at residues 15-35 (WFSCVIVLIMLPAMFGISLGI), 146-166 (ISLRLTVLWVVGVVVRYCILL), and 170-190 (ITLTTIGLTWLVIGTTTVGFL). An HXXXXD motif motif is present at residues 238 to 243 (HTSPID). Residues 358–378 (IMSYLLRMMTSWAIVCNVWYL) form a helical membrane-spanning segment.

The protein belongs to the 1-acyl-sn-glycerol-3-phosphate acyltransferase family.

The protein resides in the endoplasmic reticulum membrane. The catalysed reaction is sn-glycerol 3-phosphate + an acyl-CoA = a 1-acyl-sn-glycero-3-phosphate + CoA. It carries out the reaction a 1-acyl-sn-glycero-3-phosphate + an acyl-CoA = a 1,2-diacyl-sn-glycero-3-phosphate + CoA. It functions in the pathway glycerolipid metabolism; triacylglycerol biosynthesis. The protein operates within phospholipid metabolism; CDP-diacylglycerol biosynthesis; CDP-diacylglycerol from sn-glycerol 3-phosphate: step 1/3. May transfer the acyl-group from acyl-coA to the sn-1 position of glycerol-3-phosphate, an essential step in glycerolipid biosynthesis. Also transfers the acyl-group from acyl-coA to the sn-2 position of 1-acyl-sn-glycerol-3-phosphate (lysophosphatidic acid, or LPA), forming 1,2-diacyl-sn-glycerol-3-phosphate (phosphatidic acid, or PA). The chain is Glycerol-3-phosphate acyltransferase 3-like (agpat9l) from Danio rerio (Zebrafish).